A 303-amino-acid chain; its full sequence is Probable 5-dehydro-4-deoxyglucarate dehydratase (303 aa).

The protein belongs to the DapA family.

The enzyme catalyses 5-dehydro-4-deoxy-D-glucarate + H(+) = 2,5-dioxopentanoate + CO2 + H2O. It functions in the pathway carbohydrate acid metabolism; D-glucarate degradation; 2,5-dioxopentanoate from D-glucarate: step 2/2. The sequence is that of Probable 5-dehydro-4-deoxyglucarate dehydratase from Acinetobacter baumannii (strain AB307-0294).